The following is a 147-amino-acid chain: Cyanate hydratase (147 aa).

Residues arginine 88, glutamate 91, and serine 114 contribute to the active site.

The protein belongs to the cyanase family.

It carries out the reaction cyanate + hydrogencarbonate + 3 H(+) = NH4(+) + 2 CO2. Functionally, catalyzes the reaction of cyanate with bicarbonate to produce ammonia and carbon dioxide. This chain is Cyanate hydratase, found in Albidiferax ferrireducens (strain ATCC BAA-621 / DSM 15236 / T118) (Rhodoferax ferrireducens).